We begin with the raw amino-acid sequence, 194 residues long: Outer surface 22 kDa lipoprotein (194 aa).

Residues 1–21 (MYKNGFFKNYLSLLLIFLVIA) form the signal peptide. A lipid anchor (N-palmitoyl cysteine) is attached at Cys22. Residue Cys22 is the site of S-diacylglycerol cysteine attachment.

The protein resides in the cell outer membrane. The polypeptide is Outer surface 22 kDa lipoprotein (p22) (Borreliella burgdorferi (strain N40) (Borrelia burgdorferi)).